The following is a 153-amino-acid chain: NAD(P)H-quinone oxidoreductase subunit N (153 aa).

Belongs to the complex I NdhN subunit family. NDH-1 can be composed of about 15 different subunits; different subcomplexes with different compositions have been identified which probably have different functions.

It is found in the cellular thylakoid membrane. It catalyses the reaction a plastoquinone + NADH + (n+1) H(+)(in) = a plastoquinol + NAD(+) + n H(+)(out). It carries out the reaction a plastoquinone + NADPH + (n+1) H(+)(in) = a plastoquinol + NADP(+) + n H(+)(out). Its function is as follows. NDH-1 shuttles electrons from an unknown electron donor, via FMN and iron-sulfur (Fe-S) centers, to quinones in the respiratory and/or the photosynthetic chain. The immediate electron acceptor for the enzyme in this species is believed to be plastoquinone. Couples the redox reaction to proton translocation, and thus conserves the redox energy in a proton gradient. Cyanobacterial NDH-1 also plays a role in inorganic carbon-concentration. This Parasynechococcus marenigrum (strain WH8102) protein is NAD(P)H-quinone oxidoreductase subunit N.